The sequence spans 271 residues: Solute carrier family 66 member 2 (271 aa).

3 consecutive transmembrane segments (helical) span residues 7–27 (GWLL…AMVF), 49–69 (FSTH…LFWF), and 72–92 (HFES…LLML). Residues 14–80 (HQLVSWVAAG…RHFESPLLWQ (67 aa)) enclose the PQ-loop 1 domain. The residue at position 110 (serine 110) is a Phosphoserine. The next 3 helical transmembrane spans lie at 143-163 (FADY…ITYL), 168-188 (ALFV…LGVP), and 232-252 (VCGL…YAFA). Residues 149 to 215 (CVLAFTGVAG…MVLMWTSGDT (67 aa)) enclose the PQ-loop 2 domain.

Its subcellular location is the membrane. The sequence is that of Solute carrier family 66 member 2 (Slc66a2) from Rattus norvegicus (Rat).